The following is a 450-amino-acid chain: 3-phosphoshikimate 1-carboxyvinyltransferase (450 aa).

Residues lysine 28, serine 29, and arginine 33 each contribute to the 3-phosphoshikimate site. Lysine 28 is a phosphoenolpyruvate binding site. Residues glycine 100 and arginine 128 each contribute to the phosphoenolpyruvate site. Positions 173, 175, 326, and 353 each coordinate 3-phosphoshikimate. Glutamine 175 serves as a coordination point for phosphoenolpyruvate. Residue aspartate 326 is the Proton acceptor of the active site. Residues arginine 357 and arginine 402 each contribute to the phosphoenolpyruvate site.

Belongs to the EPSP synthase family. Monomer.

Its subcellular location is the cytoplasm. It catalyses the reaction 3-phosphoshikimate + phosphoenolpyruvate = 5-O-(1-carboxyvinyl)-3-phosphoshikimate + phosphate. It participates in metabolic intermediate biosynthesis; chorismate biosynthesis; chorismate from D-erythrose 4-phosphate and phosphoenolpyruvate: step 6/7. Functionally, catalyzes the transfer of the enolpyruvyl moiety of phosphoenolpyruvate (PEP) to the 5-hydroxyl of shikimate-3-phosphate (S3P) to produce enolpyruvyl shikimate-3-phosphate and inorganic phosphate. In Brucella melitensis biotype 2 (strain ATCC 23457), this protein is 3-phosphoshikimate 1-carboxyvinyltransferase.